A 335-amino-acid polypeptide reads, in one-letter code: Tetraacyldisaccharide 4'-kinase (335 aa).

T59 to T66 provides a ligand contact to ATP.

The protein belongs to the LpxK family.

The catalysed reaction is a lipid A disaccharide + ATP = a lipid IVA + ADP + H(+). Its pathway is glycolipid biosynthesis; lipid IV(A) biosynthesis; lipid IV(A) from (3R)-3-hydroxytetradecanoyl-[acyl-carrier-protein] and UDP-N-acetyl-alpha-D-glucosamine: step 6/6. Its function is as follows. Transfers the gamma-phosphate of ATP to the 4'-position of a tetraacyldisaccharide 1-phosphate intermediate (termed DS-1-P) to form tetraacyldisaccharide 1,4'-bis-phosphate (lipid IVA). The sequence is that of Tetraacyldisaccharide 4'-kinase from Vibrio cholerae serotype O1 (strain ATCC 39541 / Classical Ogawa 395 / O395).